Reading from the N-terminus, the 475-residue chain is 3-isopropylmalate dehydratase large subunit (475 aa).

Residues cysteine 348, cysteine 408, and cysteine 411 each coordinate [4Fe-4S] cluster.

This sequence belongs to the aconitase/IPM isomerase family. LeuC type 1 subfamily. In terms of assembly, heterodimer of LeuC and LeuD. [4Fe-4S] cluster is required as a cofactor.

It carries out the reaction (2R,3S)-3-isopropylmalate = (2S)-2-isopropylmalate. Its pathway is amino-acid biosynthesis; L-leucine biosynthesis; L-leucine from 3-methyl-2-oxobutanoate: step 2/4. Catalyzes the isomerization between 2-isopropylmalate and 3-isopropylmalate, via the formation of 2-isopropylmaleate. The polypeptide is 3-isopropylmalate dehydratase large subunit (Acidobacterium capsulatum (strain ATCC 51196 / DSM 11244 / BCRC 80197 / JCM 7670 / NBRC 15755 / NCIMB 13165 / 161)).